The sequence spans 446 residues: tRNA modification GTPase MnmE (446 aa).

(6S)-5-formyl-5,6,7,8-tetrahydrofolate is bound by residues Arg-22, Glu-80, and Lys-119. One can recognise a TrmE-type G domain in the interval 215–370; the sequence is GLSLVIAGRP…LKKVIKQVVG (156 aa). K(+) is bound at residue Asn-225. Residues 225 to 230, 244 to 250, and 269 to 272 contribute to the GTP site; these read NAGKST, TEIAGTT, and DTAG. Residue Ser-229 participates in Mg(2+) binding. The K(+) site is built by Thr-244, Ile-246, and Thr-249. Thr-250 is a Mg(2+) binding site. Lys-446 serves as a coordination point for (6S)-5-formyl-5,6,7,8-tetrahydrofolate.

It belongs to the TRAFAC class TrmE-Era-EngA-EngB-Septin-like GTPase superfamily. TrmE GTPase family. In terms of assembly, homodimer. Heterotetramer of two MnmE and two MnmG subunits. K(+) is required as a cofactor.

Its subcellular location is the cytoplasm. In terms of biological role, exhibits a very high intrinsic GTPase hydrolysis rate. Involved in the addition of a carboxymethylaminomethyl (cmnm) group at the wobble position (U34) of certain tRNAs, forming tRNA-cmnm(5)s(2)U34. The polypeptide is tRNA modification GTPase MnmE (Legionella pneumophila (strain Paris)).